The following is a 345-amino-acid chain: Biotin synthase (345 aa).

The 219-residue stretch at 38–256 (RQVQVSTLLS…IAVARIMMPA (219 aa)) folds into the Radical SAM core domain. Cys-53, Cys-57, and Cys-60 together coordinate [4Fe-4S] cluster. [2Fe-2S] cluster is bound by residues Cys-97, Cys-128, Cys-188, and Arg-260.

The protein belongs to the radical SAM superfamily. Biotin synthase family. Homodimer. [4Fe-4S] cluster serves as cofactor. It depends on [2Fe-2S] cluster as a cofactor.

The catalysed reaction is (4R,5S)-dethiobiotin + (sulfur carrier)-SH + 2 reduced [2Fe-2S]-[ferredoxin] + 2 S-adenosyl-L-methionine = (sulfur carrier)-H + biotin + 2 5'-deoxyadenosine + 2 L-methionine + 2 oxidized [2Fe-2S]-[ferredoxin]. The protein operates within cofactor biosynthesis; biotin biosynthesis; biotin from 7,8-diaminononanoate: step 2/2. Functionally, catalyzes the conversion of dethiobiotin (DTB) to biotin by the insertion of a sulfur atom into dethiobiotin via a radical-based mechanism. This chain is Biotin synthase, found in Pectobacterium atrosepticum (strain SCRI 1043 / ATCC BAA-672) (Erwinia carotovora subsp. atroseptica).